We begin with the raw amino-acid sequence, 161 residues long: Large ribosomal subunit protein uL15 (161 aa).

Residues 1-43 (MKLSDIADNAGSRKKRMRIGRGIGSGKGKTGGRGGKGQTARSG) are disordered. A compositionally biased stretch (gly residues) spans 21 to 37 (RGIGSGKGKTGGRGGKG).

The protein belongs to the universal ribosomal protein uL15 family. As to quaternary structure, part of the 50S ribosomal subunit.

Its function is as follows. Binds to the 23S rRNA. This chain is Large ribosomal subunit protein uL15, found in Nitrobacter hamburgensis (strain DSM 10229 / NCIMB 13809 / X14).